A 425-amino-acid chain; its full sequence is Serine hydroxymethyltransferase 2 (425 aa).

(6S)-5,6,7,8-tetrahydrofolate contacts are provided by residues Leu121 and 125-127 (GHL). Lys230 is subject to N6-(pyridoxal phosphate)lysine.

It belongs to the SHMT family. In terms of assembly, homodimer. Pyridoxal 5'-phosphate serves as cofactor.

It is found in the cytoplasm. The catalysed reaction is (6R)-5,10-methylene-5,6,7,8-tetrahydrofolate + glycine + H2O = (6S)-5,6,7,8-tetrahydrofolate + L-serine. It participates in one-carbon metabolism; tetrahydrofolate interconversion. It functions in the pathway amino-acid biosynthesis; glycine biosynthesis; glycine from L-serine: step 1/1. Its function is as follows. Catalyzes the reversible interconversion of serine and glycine with tetrahydrofolate (THF) serving as the one-carbon carrier. This reaction serves as the major source of one-carbon groups required for the biosynthesis of purines, thymidylate, methionine, and other important biomolecules. Also exhibits THF-independent aldolase activity toward beta-hydroxyamino acids, producing glycine and aldehydes, via a retro-aldol mechanism. The polypeptide is Serine hydroxymethyltransferase 2 (Mycobacterium bovis (strain ATCC BAA-935 / AF2122/97)).